A 289-amino-acid polypeptide reads, in one-letter code: Homeobox protein engrailed-2 (289 aa).

2 stretches are compositionally biased toward basic and acidic residues: residues Met-1–Ala-12 and Glu-60–Arg-83. Disordered stretches follow at residues Met-1 to Pro-166 and Ser-179 to Ala-206. Gly residues predominate over residues Val-96 to Gly-114. Residues Leu-142 to Ser-160 are compositionally biased toward low complexity. The segment at residues Asp-200–Thr-259 is a DNA-binding region (homeobox).

It belongs to the engrailed homeobox family.

Its subcellular location is the nucleus. In Gallus gallus (Chicken), this protein is Homeobox protein engrailed-2 (EN2).